A 273-amino-acid polypeptide reads, in one-letter code: 2,3,4,5-tetrahydropyridine-2,6-dicarboxylate N-succinyltransferase (273 aa).

2 residues coordinate substrate: Arg104 and Asp141.

It belongs to the transferase hexapeptide repeat family. Homotrimer.

The protein localises to the cytoplasm. It carries out the reaction (S)-2,3,4,5-tetrahydrodipicolinate + succinyl-CoA + H2O = (S)-2-succinylamino-6-oxoheptanedioate + CoA. The protein operates within amino-acid biosynthesis; L-lysine biosynthesis via DAP pathway; LL-2,6-diaminopimelate from (S)-tetrahydrodipicolinate (succinylase route): step 1/3. The protein is 2,3,4,5-tetrahydropyridine-2,6-dicarboxylate N-succinyltransferase of Azoarcus sp. (strain BH72).